The chain runs to 201 residues: 3-isopropylmalate dehydratase small subunit (201 aa).

The protein belongs to the LeuD family. LeuD type 1 subfamily. In terms of assembly, heterodimer of LeuC and LeuD.

It carries out the reaction (2R,3S)-3-isopropylmalate = (2S)-2-isopropylmalate. Its pathway is amino-acid biosynthesis; L-leucine biosynthesis; L-leucine from 3-methyl-2-oxobutanoate: step 2/4. Functionally, catalyzes the isomerization between 2-isopropylmalate and 3-isopropylmalate, via the formation of 2-isopropylmaleate. The chain is 3-isopropylmalate dehydratase small subunit from Dinoroseobacter shibae (strain DSM 16493 / NCIMB 14021 / DFL 12).